The primary structure comprises 250 residues: MEEIKRLVLAMQFMTHLPIPIEIDVEKSEFYKIASYFPIVGIVIGGILSLFYIALKDFFSREIVMTFIVAFSYVLTGAMHIDGLADTFDGLFSNKDKSKMLEIMRDSRLGTNGVLALVFMVVLKILFLTNINENITLTALLITPIIGRLSIVFSMMITKSARGGEGLGGLMLGKVGIREFAIAFVISIATSYFILPLAVFVKILTISLFVTYIVSKYISLRIGGMTGDTLGAVNELAELTALICFVSVSL.

6 helical membrane-spanning segments follow: residues 33–53, 63–83, 109–129, 137–157, 180–200, and 203–223; these read IASY…LFYI, IVMT…HIDG, LGTN…LFLT, LTAL…SMMI, FAIA…LAVF, and ILTI…LRIG.

The protein belongs to the CobS family. Mg(2+) serves as cofactor.

It is found in the cell membrane. The enzyme catalyses alpha-ribazole + adenosylcob(III)inamide-GDP = adenosylcob(III)alamin + GMP + H(+). It catalyses the reaction alpha-ribazole 5'-phosphate + adenosylcob(III)inamide-GDP = adenosylcob(III)alamin 5'-phosphate + GMP + H(+). It functions in the pathway cofactor biosynthesis; adenosylcobalamin biosynthesis; adenosylcobalamin from cob(II)yrinate a,c-diamide: step 7/7. In terms of biological role, joins adenosylcobinamide-GDP and alpha-ribazole to generate adenosylcobalamin (Ado-cobalamin). Also synthesizes adenosylcobalamin 5'-phosphate from adenosylcobinamide-GDP and alpha-ribazole 5'-phosphate. The protein is Adenosylcobinamide-GDP ribazoletransferase of Thermoanaerobacter sp. (strain X514).